A 291-amino-acid polypeptide reads, in one-letter code: Kidney mitochondrial carrier protein 1 (291 aa).

Serine 2 is modified (N-acetylserine). 3 Solcar repeats span residues 7–96 (KPFV…LKRL), 104–189 (ETLP…TKKH), and 198–289 (DTVY…LKKL). A run of 6 helical transmembrane segments spans residues 9–26 (FVYG…TFPI), 71–89 (GIAP…KIGT), 105–124 (TLPI…STIA), 164–183 (GVSL…LPVY), 204–224 (FLSS…VDVV), and 264–283 (GFWP…FVTY).

Belongs to the mitochondrial carrier (TC 2.A.29) family. In terms of assembly, interacts with VDAC1.

The protein resides in the mitochondrion inner membrane. It catalyses the reaction sulfite(in) + sulfate(out) = sulfite(out) + sulfate(in). It carries out the reaction thiosulfate(in) + sulfate(out) = thiosulfate(out) + sulfate(in). The catalysed reaction is sulfate(out) + phosphate(in) = sulfate(in) + phosphate(out). The enzyme catalyses oxalate(in) + sulfate(out) = oxalate(out) + sulfate(in). It catalyses the reaction malonate(in) + sulfate(out) = malonate(out) + sulfate(in). It carries out the reaction maleate(in) + sulfate(out) = maleate(out) + sulfate(in). The catalysed reaction is (S)-malate(in) + sulfate(out) = (S)-malate(out) + sulfate(in). The enzyme catalyses (3S)-citramalate(in) + sulfate(out) = (3S)-citramalate(out) + sulfate(in). It catalyses the reaction (3R)-citramalate(in) + sulfate(out) = (3R)-citramalate(out) + sulfate(in). It carries out the reaction sulfate(out) + succinate(in) = sulfate(in) + succinate(out). The catalysed reaction is (S,S)-tartrate(in) + sulfate(out) = (S,S)-tartrate(out) + sulfate(in). The enzyme catalyses (2R,3R)-tartrate(in) + sulfate(out) = (2R,3R)-tartrate(out) + sulfate(in). It catalyses the reaction D-aspartate(in) + sulfate(out) = D-aspartate(out) + sulfate(in). It carries out the reaction L-aspartate(in) + sulfate(out) = L-aspartate(out) + sulfate(in). The catalysed reaction is sulfate(in) = sulfate(out). The enzyme catalyses phosphate(in) = phosphate(out). It catalyses the reaction (S)-malate(out) = (S)-malate(in). With respect to regulation, increased activity at pH 6.0. sulfate/sulfate exchange activity is inhibited strongly by pyridoxal 5'-phosphate, bathophenanthroline and the organic mercurials mersalyl, p-chloromercuribenzoate and HgCl2. Its function is as follows. Antiporter that transports inorganic anions (sulfate, sulfite, thiosulfate and phosphate) and, to a lesser extent, a variety of dicarboxylates (e.g. malonate, malate and citramalate) and, even more so, aspartate. The sulfate/sulfate exchange is much higher than the phosphate/phosphate and malate/malate exchanges. The transport affinities is higher for sulfate and thiosulfate than for any other substrate. May catalyze the export of sulfite and thiosulfate (the hydrogen sulfide degradation products) from the mitochondria, thereby modulating the level of the hydrogen sulfide. Also may mediate a very low unidirectional transport of sulfate, phosphate and (S)-malate. In Homo sapiens (Human), this protein is Kidney mitochondrial carrier protein 1.